Here is a 350-residue protein sequence, read N- to C-terminus: LysM domain-containing GPI-anchored protein 2 (350 aa).

Positions M1–A23 are cleaved as a signal peptide. Residues N30, N48, N76, and N99 are each glycosylated (N-linked (GlcNAc...) asparagine). 4 disulfides stabilise this stretch: C31–C97, C38–C161, C95–C159, and C97–C161. LysM domains are found at residues I108–I155 and Y172–V216. Residues K114–F120 and P142–I149 contribute to the chitin site. 5 N-linked (GlcNAc...) asparagine glycosylation sites follow: N193, N238, N258, N289, and N305. Disulfide bonds link C221–C253 and C248–C277. D318 carries the GPI-anchor amidated aspartate lipid modification. Residues S319 to L350 constitute a propeptide, removed in mature form.

In terms of assembly, forms homooligomers. Interacts with CERK1. Binds to chitin oligosaccharide elicitor.

It localises to the cell membrane. Chitin elicitor-binding protein involved in the perception of chitin oligosaccharide elicitor. The polypeptide is LysM domain-containing GPI-anchored protein 2 (LYM2) (Arabidopsis thaliana (Mouse-ear cress)).